We begin with the raw amino-acid sequence, 62 residues long: UPF0434 protein BP2767 (62 aa).

It belongs to the UPF0434 family.

The sequence is that of UPF0434 protein BP2767 from Bordetella pertussis (strain Tohama I / ATCC BAA-589 / NCTC 13251).